The following is a 535-amino-acid chain: Sodium/hydrogen exchanger 1 (535 aa).

Topologically, residues 1 to 21 are cytoplasmic; it reads MGMEVAAARLGALYTTSDYAS. The chain crosses the membrane as a helical span at residues 22-42; the sequence is VVSINLFVALLCACIVLGHLL. The Vacuolar segment spans residues 43–46; sequence EENR. The helical transmembrane segment at 47–67 threads the bilayer; the sequence is WVNESITALIIGLCTGVVILL. Over 68–75 the chain is Cytoplasmic; it reads MTKGKSSH. A helical transmembrane segment spans residues 76–96; the sequence is LFVFSEDLFFIYLLPPIIFNA. At 97–114 the chain is on the vacuolar side; sequence GFQVKKKQFFRNFMTITL. A helical membrane pass occupies residues 115 to 135; that stretch reads FGAVGTMISFFTISIAAIAIF. Residues 136 to 137 lie on the Cytoplasmic side of the membrane; that stretch reads SR. A helical membrane pass occupies residues 138 to 158; it reads MNIGTLDVGDFLAIGAIFSAT. The Vacuolar portion of the chain corresponds to 159–173; that stretch reads DSVCTLQVLNQDETP. Residues 174-194 form a helical membrane-spanning segment; that stretch reads FLYSLVFGEGVVNDATSIVLF. Topologically, residues 195-218 are cytoplasmic; that stretch reads NALQNFDLVHIDAAVVLKFLGNFF. Residues 219 to 239 form a helical membrane-spanning segment; the sequence is YLFLSSTFLGVFAGLLSAYII. Residues 240 to 264 are Vacuolar-facing; that stretch reads KKLYIGRHSTDREVALMMLMAYLSY. A helical transmembrane segment spans residues 265 to 285; sequence MLAELLDLSGILTVFFCGIVM. Residues 286–304 lie on the Cytoplasmic side of the membrane; that stretch reads SHYTWHNVTESSRVTTKHA. The helical transmembrane segment at 305 to 325 threads the bilayer; that stretch reads FATLSFIAETFLFLYVGMDAL. At 326–344 the chain is on the vacuolar side; it reads DIEKWEFASDRPGKSIGIS. Residues 345–365 traverse the membrane as a helical segment; it reads SILLGLVLIGRAAFVFPLSFL. The Cytoplasmic portion of the chain corresponds to 366 to 381; that stretch reads SNLTKKAPNEKITWRQ. The chain crosses the membrane as a helical span at residues 382–402; the sequence is QVVIWWAGLMRGAVSIALAYN. The Vacuolar portion of the chain corresponds to 403–415; it reads KFTRSGHTQLHGN. A helical membrane pass occupies residues 416–436; it reads AIMITSTITVVLFSTMVFGMM. The Cytoplasmic portion of the chain corresponds to 437 to 535; sequence TKPLIRLLLP…SPTEQSHGGR (99 aa). The tract at residues 452-478 is disordered; the sequence is VTSEPSSPKSLHSPLLTSMQGSDLEST. Residues 454 to 469 show a composition bias toward low complexity; that stretch reads SEPSSPKSLHSPLLTS.

Belongs to the monovalent cation:proton antiporter 1 (CPA1) transporter (TC 2.A.36) family.

The protein localises to the vacuole membrane. It carries out the reaction Na(+)(in) + H(+)(out) = Na(+)(out) + H(+)(in). The catalysed reaction is K(+)(in) + H(+)(out) = K(+)(out) + H(+)(in). Functionally, vacuolar antiporter that acts in low affinity electroneutral exchange of protons H(+) for cations such as Na(+) or K(+) across membranes. Plays important roles in the transport of Na(+) and K(+) accumulated in the cytoplasm into vacuoles, and is involved in salt stress tolerance. In Oryza sativa subsp. japonica (Rice), this protein is Sodium/hydrogen exchanger 1.